Reading from the N-terminus, the 331-residue chain is Photosystem II assembly lipoprotein Ycf48 (331 aa).

The first 23 residues, 1-23 (MIPVIRSFLSLLLCVGLTFGLGG), serve as a signal peptide directing secretion. Cys24 is lipidated: N-palmitoyl cysteine. Cys24 is lipidated: S-diacylglycerol cysteine.

The protein belongs to the Ycf48 family. As to quaternary structure, part of early PSII assembly complexes which includes D1 (psbA) and PsbI; not found in mature PSII. Binds to the lumenal side of PSII complexes. Interacts with YidC.

Its subcellular location is the cellular thylakoid membrane. Its function is as follows. A factor required for optimal assembly of photosystem II (PSII), acting in the early stages of PSII assembly. Also plays a role in replacement of photodamaged D1 (psbA). Assists YidC in synthesis of chlorophyll-binding proteins. The protein is Photosystem II assembly lipoprotein Ycf48 of Synechococcus sp. (strain RCC307).